Consider the following 211-residue polypeptide: Holliday junction resolvase RecU (211 aa).

Positions 87, 89, 102, and 121 each coordinate Mg(2+).

This sequence belongs to the RecU family. Requires Mg(2+) as cofactor.

The protein localises to the cytoplasm. It carries out the reaction Endonucleolytic cleavage at a junction such as a reciprocal single-stranded crossover between two homologous DNA duplexes (Holliday junction).. Endonuclease that resolves Holliday junction intermediates in genetic recombination. Cleaves mobile four-strand junctions by introducing symmetrical nicks in paired strands. Promotes annealing of linear ssDNA with homologous dsDNA. Required for DNA repair, homologous recombination and chromosome segregation. The sequence is that of Holliday junction resolvase RecU from Limosilactobacillus fermentum (strain NBRC 3956 / LMG 18251) (Lactobacillus fermentum).